Reading from the N-terminus, the 333-residue chain is Glycerol-3-phosphate dehydrogenase [NAD(P)+] (333 aa).

3 residues coordinate NADPH: Ser-10, Trp-11, and Lys-105. Sn-glycerol 3-phosphate-binding residues include Lys-105, Gly-136, and Thr-138. Ala-140 contacts NADPH. Positions 191, 244, 254, 255, and 256 each coordinate sn-glycerol 3-phosphate. The Proton acceptor role is filled by Lys-191. Arg-255 contributes to the NADPH binding site. NADPH contacts are provided by Val-279 and Glu-281.

It belongs to the NAD-dependent glycerol-3-phosphate dehydrogenase family.

The protein resides in the cytoplasm. It catalyses the reaction sn-glycerol 3-phosphate + NAD(+) = dihydroxyacetone phosphate + NADH + H(+). It carries out the reaction sn-glycerol 3-phosphate + NADP(+) = dihydroxyacetone phosphate + NADPH + H(+). The protein operates within membrane lipid metabolism; glycerophospholipid metabolism. In terms of biological role, catalyzes the reduction of the glycolytic intermediate dihydroxyacetone phosphate (DHAP) to sn-glycerol 3-phosphate (G3P), the key precursor for phospholipid synthesis. In Trichlorobacter lovleyi (strain ATCC BAA-1151 / DSM 17278 / SZ) (Geobacter lovleyi), this protein is Glycerol-3-phosphate dehydrogenase [NAD(P)+].